Reading from the N-terminus, the 538-residue chain is Chaperonin GroEL (538 aa).

Residues T29–P32, D86–T90, G413, N477–A479, and D493 contribute to the ATP site.

It belongs to the chaperonin (HSP60) family. Forms a cylinder of 14 subunits composed of two heptameric rings stacked back-to-back. Interacts with the co-chaperonin GroES.

The protein localises to the cytoplasm. It catalyses the reaction ATP + H2O + a folded polypeptide = ADP + phosphate + an unfolded polypeptide.. Its function is as follows. Together with its co-chaperonin GroES, plays an essential role in assisting protein folding. The GroEL-GroES system forms a nano-cage that allows encapsulation of the non-native substrate proteins and provides a physical environment optimized to promote and accelerate protein folding. This Scardovia inopinata (Bifidobacterium inopinatum) protein is Chaperonin GroEL.